The chain runs to 174 residues: Cytochrome c-type biogenesis protein CcmE (174 aa).

Topologically, residues 1-8 (MNPRRKSR) are cytoplasmic. A helical; Signal-anchor for type II membrane protein transmembrane segment spans residues 9–29 (LSVVLFILLGISVASALVLYA). At 30–174 (LRQNIDLFYT…QEKQFKEGNQ (145 aa)) the chain is on the periplasmic side. Positions 131 and 135 each coordinate heme. Residues 149–174 (KPMGISDLKNESDRDRQEKQFKEGNQ) form a disordered region. Over residues 156-174 (LKNESDRDRQEKQFKEGNQ) the composition is skewed to basic and acidic residues.

The protein belongs to the CcmE/CycJ family.

It is found in the cell inner membrane. Functionally, heme chaperone required for the biogenesis of c-type cytochromes. Transiently binds heme delivered by CcmC and transfers the heme to apo-cytochromes in a process facilitated by CcmF and CcmH. The sequence is that of Cytochrome c-type biogenesis protein CcmE from Histophilus somni (strain 2336) (Haemophilus somnus).